We begin with the raw amino-acid sequence, 582 residues long: Protein NRT1/ PTR FAMILY 5.2 (582 aa).

11 consecutive transmembrane segments (helical) span residues 77–97 (WVGT…ALLG), 100–120 (ITFV…TLSV), 141–161 (ASVL…IGTG), 189–209 (FFNW…TVLV), 217–237 (WTLG…IFLL), 334–354 (PVLF…TLFV), 370–390 (IPPA…IVLY), 408–428 (ITLL…MIVA), 452–472 (LPLT…ADSF), 493–515 (GTSY…LSTV), and 538–558 (YYYL…LVVV).

Belongs to the major facilitator superfamily. Proton-dependent oligopeptide transporter (POT/PTR) (TC 2.A.17) family. As to expression, expressed in roots. Detected in shoots, leaves and flowers.

It is found in the membrane. Peptide transporter involved in stress tolerance in seeds during germination and in defense against virulent bacterial pathogens. The chain is Protein NRT1/ PTR FAMILY 5.2 (NPF5.2) from Arabidopsis thaliana (Mouse-ear cress).